Here is a 190-residue protein sequence, read N- to C-terminus: Orotate phosphoribosyltransferase (190 aa).

Position 114–122 (114–122) interacts with 5-phospho-alpha-D-ribose 1-diphosphate; it reads EDVITTGGS. Residues T118 and R146 each contribute to the orotate site.

The protein belongs to the purine/pyrimidine phosphoribosyltransferase family. PyrE subfamily. Homodimer. The cofactor is Mg(2+).

It catalyses the reaction orotidine 5'-phosphate + diphosphate = orotate + 5-phospho-alpha-D-ribose 1-diphosphate. The protein operates within pyrimidine metabolism; UMP biosynthesis via de novo pathway; UMP from orotate: step 1/2. Its function is as follows. Catalyzes the transfer of a ribosyl phosphate group from 5-phosphoribose 1-diphosphate to orotate, leading to the formation of orotidine monophosphate (OMP). The polypeptide is Orotate phosphoribosyltransferase (Pelotomaculum thermopropionicum (strain DSM 13744 / JCM 10971 / SI)).